Reading from the N-terminus, the 271-residue chain is Formamidopyrimidine-DNA glycosylase (271 aa).

The Schiff-base intermediate with DNA role is filled by P2. The active-site Proton donor is E3. The active-site Proton donor; for beta-elimination activity is K58. The DNA site is built by H92, R111, and R152. The segment at 237–271 (TVYGREGEPCKQCGRVLKHAMIGQRATVWCGSCQR) adopts an FPG-type zinc-finger fold. Residue R261 is the Proton donor; for delta-elimination activity of the active site.

Belongs to the FPG family. As to quaternary structure, monomer. The cofactor is Zn(2+).

The enzyme catalyses Hydrolysis of DNA containing ring-opened 7-methylguanine residues, releasing 2,6-diamino-4-hydroxy-5-(N-methyl)formamidopyrimidine.. The catalysed reaction is 2'-deoxyribonucleotide-(2'-deoxyribose 5'-phosphate)-2'-deoxyribonucleotide-DNA = a 3'-end 2'-deoxyribonucleotide-(2,3-dehydro-2,3-deoxyribose 5'-phosphate)-DNA + a 5'-end 5'-phospho-2'-deoxyribonucleoside-DNA + H(+). In terms of biological role, involved in base excision repair of DNA damaged by oxidation or by mutagenic agents. Acts as a DNA glycosylase that recognizes and removes damaged bases. Has a preference for oxidized purines, such as 7,8-dihydro-8-oxoguanine (8-oxoG). Has AP (apurinic/apyrimidinic) lyase activity and introduces nicks in the DNA strand. Cleaves the DNA backbone by beta-delta elimination to generate a single-strand break at the site of the removed base with both 3'- and 5'-phosphates. The protein is Formamidopyrimidine-DNA glycosylase of Xanthomonas oryzae pv. oryzae (strain MAFF 311018).